Consider the following 362-residue polypeptide: ATPase ARSA2 (362 aa).

Residue 27-34 (KGGVGKTT) participates in ATP binding. Aspartate 58 is a catalytic residue. Positions 235 and 262 each coordinate ATP.

It belongs to the arsA ATPase family. Homodimer. Interacts with SEC61B.

The protein localises to the cytoplasm. Its subcellular location is the cytosol. It is found in the endoplasmic reticulum. Its function is as follows. ATPase required for the post-translational delivery of tail-anchored (TA) proteins to the endoplasmic reticulum. Recognizes and selectively binds the transmembrane domain of TA proteins in the cytosol. This complex then targets to the endoplasmic reticulum by membrane-bound receptors, where the tail-anchored protein is released for insertion. This process is regulated by ATP binding and hydrolysis. ATP binding drives the homodimer towards the closed dimer state, facilitating recognition of newly synthesized TA membrane proteins. ATP hydrolysis is required for insertion. Subsequently, the homodimer reverts towards the open dimer state, lowering its affinity for the membrane-bound receptor, and returning it to the cytosol to initiate a new round of targeting. The protein is ATPase ARSA2 of Chlamydomonas reinhardtii (Chlamydomonas smithii).